Here is a 1063-residue protein sequence, read N- to C-terminus: Structural polyprotein (1063 aa).

Residues 1-131 (MASTTPITME…LGPPTNPFQA (131 aa)) form a disordered region. The human C1QBP/SF2P32-binding stretch occupies residues 30–69 (GASQSRRPRPPRQRDSSTTGDDSGRDSGGPRRRRGNRGRG). Position 46 is a phosphoserine; by host (serine 46). The segment covering 59–69 (PRRRRGNRGRG) has biased composition (basic residues). Residues 70–87 (QRRDWSRAPPPPEERQET) show a composition bias toward basic and acidic residues. Over residues 93–107 (APKPSRAPPQQPQPP) the composition is skewed to pro residues. Cysteines 153 and 197 form a disulfide. The tract at residues 279–300 (GAPQAFLAGLLLAAVAVGTARA) is functions as E2 signal peptide. Residues 301–534 (GLQPRADMAA…LWLATANALS (234 aa)) lie on the Extracellular side of the membrane. N-linked (GlcNAc...) asparagine; by host glycans are attached at residues asparagine 353, asparagine 371, asparagine 410, and asparagine 429. A helical transmembrane segment spans residues 535-555 (LDHALAAFVLLVPWVLIFMVC). The Cytoplasmic portion of the chain corresponds to 556–582 (RRTCRRRGAAAALTAVVLQGYNPPAYG). The interval 563–582 (GAAAALTAVVLQGYNPPAYG) is functions as E1 signal peptide. Residues 583 to 1028 (EEAFTYLCTA…QTWAEWAAAH (446 aa)) are Extracellular-facing. 8 disulfides stabilise this stretch: cysteine 590–cysteine 595, cysteine 619–cysteine 824, cysteine 641–cysteine 653, cysteine 699–cysteine 712, cysteine 758–cysteine 767, cysteine 807–cysteine 817, cysteine 931–cysteine 934, and cysteine 950–cysteine 983. The N-linked (GlcNAc...) asparagine; by host glycan is linked to asparagine 658. Residues asparagine 670 and alanine 671 each coordinate Ca(2+). Positions 718 and 719 each coordinate Ca(2+). Residues asparagine 759 and asparagine 791 are each glycosylated (N-linked (GlcNAc...) asparagine; by host). Threonine 1011 and threonine 1012 each carry an O-linked (GalNAc...) threonine; by host glycan. A helical transmembrane segment spans residues 1029-1049 (WWQLTLGAICALLLAGLLACC). The Extracellular portion of the chain corresponds to 1050–1063 (AKCLYYLRGAIAPR).

In terms of assembly, homodimer; further assembles into homooligomer. Interacts with human C1QBP. Interacts (via N-terminus) with protease/methyltransferase p150. As to quaternary structure, heterodimer with spike glycoprotein E2. Heterodimer with spike glycoprotein E1. Post-translationally, structural polyprotein: Specific enzymatic cleavages in vivo yield mature proteins. Two signal peptidase-mediated cleavages within the polyprotein produce the structural proteins capsid, E2, and E1. The E2 signal peptide remains attached to the C-terminus of the capsid protein after cleavage by the signal peptidase. Another signal peptide at E2 C-terminus directs E1 to the ER, with a similar mechanism. In terms of processing, contains three N-linked oligosaccharides. Capsid is phosphorylated on Ser-46 by host. This phosphorylation negatively regulates capsid protein RNA-binding activity. Dephosphorylated by human PP1A.

It is found in the virion. It localises to the host cytoplasm. Its subcellular location is the host mitochondrion. The protein resides in the virion membrane. The protein localises to the host Golgi apparatus membrane. Capsid protein interacts with genomic RNA and assembles into icosahedric core particles 65-70 nm in diameter. The resulting nucleocapsid eventually associates with the cytoplasmic domain of E2 at the cell membrane, leading to budding and formation of mature virions from host Golgi membranes. Phosphorylation negatively regulates RNA-binding activity, possibly delaying virion assembly during the viral replication phase. Capsid protein dimerizes and becomes disulfide-linked in the virion. Modulates genomic RNA replication. Modulates subgenomic RNA synthesis by interacting with human C1QBP/SF2P32. Induces both perinuclear clustering of mitochondria and the formation of electron-dense intermitochondrial plaques, both hallmarks of rubella virus infected cells. Induces apoptosis when expressed in transfected cells. Functionally, responsible for viral attachment to target host cell, by binding to the cell receptor. Its transport to the plasma membrane depends on interaction with E1 protein. The surface glycoproteins display an irregular helical organization and a pseudo-tetrameric inner nucleocapsid arrangement. Its function is as follows. Class II viral fusion protein. Fusion activity is inactive as long as E1 is bound to E2 in mature virion. After virus attachment to target cell and clathrin-mediated endocytosis, acidification of the endosome would induce dissociation of E1/E2 heterodimer and concomitant trimerization of the E1 subunits. This E1 homotrimer is fusion active, and promotes release of viral nucleocapsid in cytoplasm after endosome and viral membrane fusion. The cytoplasmic tail of spike glycoprotein E1 modulates virus release. The surface glycoproteins display an irregular helical organization and a pseudo-tetrameric inner nucleocapsid arrangement. The chain is Structural polyprotein from Homo sapiens (Human).